Here is a 236-residue protein sequence, read N- to C-terminus: Ubiquinone biosynthesis O-methyltransferase (236 aa).

Residues Arg-36, Gly-56, Asp-77, and Met-125 each coordinate S-adenosyl-L-methionine.

Belongs to the methyltransferase superfamily. UbiG/COQ3 family.

It carries out the reaction a 3-demethylubiquinol + S-adenosyl-L-methionine = a ubiquinol + S-adenosyl-L-homocysteine + H(+). The enzyme catalyses a 3-(all-trans-polyprenyl)benzene-1,2-diol + S-adenosyl-L-methionine = a 2-methoxy-6-(all-trans-polyprenyl)phenol + S-adenosyl-L-homocysteine + H(+). It participates in cofactor biosynthesis; ubiquinone biosynthesis. In terms of biological role, O-methyltransferase that catalyzes the 2 O-methylation steps in the ubiquinone biosynthetic pathway. The polypeptide is Ubiquinone biosynthesis O-methyltransferase (Glaesserella parasuis serovar 5 (strain SH0165) (Haemophilus parasuis)).